The chain runs to 172 residues: Achaete-scute homolog 4 (172 aa).

The bHLH domain maps to 72 to 124 (AFLRKRNERERQRVRCVNEGYARLRDHLPRELADKRLSKVETLRAAIDYIKHL). Residues 144–172 (QRRAECNSDGESKASSAPSPSSEPEEGGS) form a disordered region. A compositionally biased stretch (basic and acidic residues) spans 145–155 (RRAECNSDGES). Low complexity predominate over residues 156-165 (KASSAPSPSS).

Expressed in skin. 7-fold higher expression in fetal skin than in adult skin. Weak expression also detected in fetal lung, aorta and brain, and in adult stomach, kidney, ovary and breast.

It is found in the nucleus. Its function is as follows. Could be a transcriptional regulator involved in skin development. This is Achaete-scute homolog 4 (ASCL4) from Homo sapiens (Human).